A 101-amino-acid polypeptide reads, in one-letter code: Apolipoprotein C-II (101 aa).

The first 22 residues, 1–22, serve as a signal peptide directing secretion; that stretch reads MGTRCLLVLLLVLLVLRCDVQG. Positions 23–28 are cleaved as a propeptide — removed in mature form; it reads DDMARQ. Residues 66-74 are lipid binding; sequence AVDEKIRDM. Residues 78-101 form a lipoprotein lipase cofactor region; that stretch reads STAAVRIYTGILTDQILSMLSGDS.

This sequence belongs to the apolipoprotein C2 family. In terms of processing, proapolipoprotein C-II is synthesized as a sialic acid containing glycoprotein which is subsequently desialylated prior to its proteolytic processing. Proapolipoprotein C-II, the major form found in plasma undergoes proteolytic cleavage of its N-terminal hexapeptide to generate the mature form apolipoprotein C-II, which occurs as the minor form in plasma.

Its subcellular location is the secreted. Component of chylomicrons, very low-density lipoproteins (VLDL), low-density lipoproteins (LDL), and high-density lipoproteins (HDL) in plasma. Plays an important role in lipoprotein metabolism as an activator of lipoprotein lipase, the enzyme which hydrolyzes the triacylglycerols on chylomicrons and VLDL. The polypeptide is Apolipoprotein C-II (APOC2) (Acinonyx jubatus (Cheetah)).